We begin with the raw amino-acid sequence, 365 residues long: Probable dual-specificity RNA methyltransferase RlmN (365 aa).

Glutamate 99 functions as the Proton acceptor in the catalytic mechanism. The region spanning 105 to 344 (QSYGLSVCVT…CVVRQEHGTD (240 aa)) is the Radical SAM core domain. Cysteine 112 and cysteine 349 are joined by a disulfide. Cysteine 119, cysteine 123, and cysteine 126 together coordinate [4Fe-4S] cluster. S-adenosyl-L-methionine contacts are provided by residues 171-172 (GE), serine 203, 227-229 (SLH), and asparagine 305. Cysteine 349 acts as the S-methylcysteine intermediate in catalysis.

It belongs to the radical SAM superfamily. RlmN family. [4Fe-4S] cluster serves as cofactor.

It is found in the cytoplasm. The catalysed reaction is adenosine(2503) in 23S rRNA + 2 reduced [2Fe-2S]-[ferredoxin] + 2 S-adenosyl-L-methionine = 2-methyladenosine(2503) in 23S rRNA + 5'-deoxyadenosine + L-methionine + 2 oxidized [2Fe-2S]-[ferredoxin] + S-adenosyl-L-homocysteine. It carries out the reaction adenosine(37) in tRNA + 2 reduced [2Fe-2S]-[ferredoxin] + 2 S-adenosyl-L-methionine = 2-methyladenosine(37) in tRNA + 5'-deoxyadenosine + L-methionine + 2 oxidized [2Fe-2S]-[ferredoxin] + S-adenosyl-L-homocysteine. In terms of biological role, specifically methylates position 2 of adenine 2503 in 23S rRNA and position 2 of adenine 37 in tRNAs. The chain is Probable dual-specificity RNA methyltransferase RlmN from Lactococcus lactis subsp. cremoris (strain MG1363).